Reading from the N-terminus, the 564-residue chain is Nucleolus and neural progenitor protein (564 aa).

Residues 431-495 are disordered; it reads GSRTSTSEHP…KRRCSGTVQR (65 aa). Basic residues predominate over residues 442–459; the sequence is RQRRSKYKVLSRQRKPQR. Residues 442-460 form a nuclear localization signal region; sequence RQRRSKYKVLSRQRKPQRK. Residues 460-473 are compositionally biased toward polar residues; sequence KLQSTLLKETQQVP.

This sequence belongs to the nepro family.

It localises to the nucleus. Its subcellular location is the nucleolus. Functionally, may play a role in cortex development as part of the Notch signaling pathway. Downstream of Notch may repress the expression of proneural genes and inhibit neuronal differentiation thereby maintaining neural progenitors. May also play a role in preimplentation embryo development. The protein is Nucleolus and neural progenitor protein of Mus musculus (Mouse).